A 260-amino-acid polypeptide reads, in one-letter code: Flap endonuclease Xni (260 aa).

Asp-104 provides a ligand contact to Mg(2+). The region spanning 160–249 is the 5'-3' exonuclease domain; it reads VSPQQLTDYW…LNGNLQQLRL (90 aa). Residues Leu-171, Ala-172, Pro-180, Val-182, and Ile-185 each coordinate K(+). Positions 184 to 189 are interaction with DNA; that stretch reads GIGPKS.

This sequence belongs to the Xni family. The cofactor is Mg(2+). Requires K(+) as cofactor.

Its function is as follows. Has flap endonuclease activity. During DNA replication, flap endonucleases cleave the 5'-overhanging flap structure that is generated by displacement synthesis when DNA polymerase encounters the 5'-end of a downstream Okazaki fragment. The protein is Flap endonuclease Xni of Pectobacterium carotovorum subsp. carotovorum (strain PC1).